Consider the following 223-residue polypeptide: Probable glutathione S-transferase (223 aa).

The 80-residue stretch at 2–81 folds into the GST N-terminal domain; that stretch reads AEVKLLGFWY…YIDETFEGPS (80 aa). Glutathione-binding positions include Ser-12, Lys-39, Val-53, and 65–66; that span reads ES. The GST C-terminal domain maps to 86-212; sequence DPYDRALARF…ELLAFFRARF (127 aa).

It belongs to the GST superfamily. HSP26 family. In terms of tissue distribution, root tip-specific expression.

It catalyses the reaction RX + glutathione = an S-substituted glutathione + a halide anion + H(+). The polypeptide is Probable glutathione S-transferase (Nicotiana tabacum (Common tobacco)).